Here is a 428-residue protein sequence, read N- to C-terminus: Cyclic AMP-responsive element-binding protein 3-like protein 3-B (428 aa).

Residues 1 to 286 (MDHYSDQGGD…VMNGSNKPVQ (286 aa)) lie on the Cytoplasmic side of the membrane. Low complexity predominate over residues 67-83 (VSGSPVWSPSPSDSGIS). The disordered stretch occupies residues 67 to 104 (VSGSPVWSPSPSDSGISEDPHSDHIDSPPPNASPPMEP). Over residues 93-103 (SPPPNASPPME) the composition is skewed to pro residues. Positions 210–273 (ILKKIRRKIR…ISLMEQLRRL (64 aa)) constitute a bZIP domain. The tract at residues 212-241 (KKIRRKIRNKQSAQESRKKKKEYIDGLESR) is basic motif. The interval 252–273 (LQRKVFQLEKCNISLMEQLRRL) is leucine-zipper. A helical; Signal-anchor for type II membrane protein transmembrane segment spans residues 287–303 (AGTCVLVLLLSFTLILL). Over 304–428 (PNLKPFTDTK…SRRSPHADDM (125 aa)) the chain is Lumenal. Residues 381–428 (TEYDPESHNHSFDQHDEHHHGDPITGHVATVTLNPRRGSRRSPHADDM) form a disordered region. Positions 385-402 (PESHNHSFDQHDEHHHGD) are enriched in basic and acidic residues. Asn389 is a glycosylation site (N-linked (GlcNAc...) asparagine).

The protein belongs to the bZIP family. ATF subfamily. In terms of assembly, binds DNA as a dimer. Post-translationally, controlled by regulated intramembrane proteolysis (RIP). A fragment containing the cytoplasmic transcription factor domain is released by proteolysis. The cleavage seems to be performed sequentially by site-1 and site-2 proteases.

Its subcellular location is the endoplasmic reticulum membrane. It localises to the nucleus. In terms of biological role, transcriptional activator. Binds the cAMP response element (CRE). Activates transcription through box-B element and CRE. Seems to function synergistically with atf6. Regulates FGF21 transcription. In Danio rerio (Zebrafish), this protein is Cyclic AMP-responsive element-binding protein 3-like protein 3-B (creb3l3b).